The chain runs to 570 residues: PTS system lactose-specific EIICB component (570 aa).

Positions 9–410 (IEKGKPFFEK…VVDIIIYYPF (402 aa)) constitute a PTS EIIC type-3 domain. 9 helical membrane passes run 31–51 (GFIS…IAYV), 65–85 (AILM…VAGT), 104–124 (INFI…ASDP), 133–153 (AFMG…TVIV), 178–198 (FKDL…DLVI), 223–243 (GWIG…VGIH), 283–303 (MFIV…MFMW), 340–360 (VFFI…KLFV), and 382–402 (IIMG…LIVV). A PTS EIIB type-3 domain is found at 467-570 (QTNVLVLCAG…LDFVQQQFEN (104 aa)). C474 serves as the catalytic Phosphocysteine intermediate; for EIIB activity. C474 bears the Phosphocysteine; by EIIA mark.

It localises to the cell membrane. It catalyses the reaction lactose(out) + N(pros)-phospho-L-histidyl-[protein] = lactose 6-phosphate(in) + L-histidyl-[protein]. The phosphoenolpyruvate-dependent sugar phosphotransferase system (sugar PTS), a major carbohydrate active transport system, catalyzes the phosphorylation of incoming sugar substrates concomitantly with their translocation across the cell membrane. The enzyme II LacEF PTS system is involved in lactose transport. The protein is PTS system lactose-specific EIICB component of Staphylococcus aureus (strain N315).